The primary structure comprises 69 residues: DNA-directed RNA polymerase subunit omega (69 aa).

Belongs to the RNA polymerase subunit omega family. The RNAP catalytic core consists of 2 alpha, 1 beta, 1 beta' and 1 omega subunit. When a sigma factor is associated with the core the holoenzyme is formed, which can initiate transcription.

It carries out the reaction RNA(n) + a ribonucleoside 5'-triphosphate = RNA(n+1) + diphosphate. Its function is as follows. Promotes RNA polymerase assembly. Latches the N- and C-terminal regions of the beta' subunit thereby facilitating its interaction with the beta and alpha subunits. This is DNA-directed RNA polymerase subunit omega from Pediococcus pentosaceus (strain ATCC 25745 / CCUG 21536 / LMG 10740 / 183-1w).